A 240-amino-acid chain; its full sequence is Uridylate kinase (240 aa).

ATP is bound at residue 13–16; sequence KLSG. An involved in allosteric activation by GTP region spans residues 21–26; sequence GDKGFG. UMP is bound at residue Gly55. ATP contacts are provided by Gly56 and Arg60. UMP-binding positions include Asp75 and 136-143; that span reads IGNPYFST. Positions 164, 170, and 173 each coordinate ATP.

This sequence belongs to the UMP kinase family. As to quaternary structure, homohexamer.

The protein localises to the cytoplasm. It catalyses the reaction UMP + ATP = UDP + ADP. The protein operates within pyrimidine metabolism; CTP biosynthesis via de novo pathway; UDP from UMP (UMPK route): step 1/1. Allosterically activated by GTP. Inhibited by UTP. Catalyzes the reversible phosphorylation of UMP to UDP. The sequence is that of Uridylate kinase from Staphylococcus epidermidis (strain ATCC 35984 / DSM 28319 / BCRC 17069 / CCUG 31568 / BM 3577 / RP62A).